A 274-amino-acid chain; its full sequence is Large ribosomal subunit protein uL2cz/uL2cy (274 aa).

Disordered regions lie at residues 1–24 (MAIH…QVKS) and 223–274 (MNPV…RRSK). Over residues 7-24 (KTSTPSTRNGTVDSQVKS) the composition is skewed to polar residues.

The protein belongs to the universal ribosomal protein uL2 family. Part of the 50S ribosomal subunit.

It localises to the plastid. It is found in the chloroplast. This chain is Large ribosomal subunit protein uL2cz/uL2cy (rpl2-A), found in Nicotiana sylvestris (Wood tobacco).